The sequence spans 181 residues: 3-hydroxyanthranilate 3,4-dioxygenase (181 aa).

O2 is bound at residue arginine 46. 3 residues coordinate Fe cation: histidine 50, glutamate 56, and histidine 95. A substrate-binding site is contributed by glutamate 56. Substrate contacts are provided by arginine 99 and glutamate 109.

It belongs to the 3-HAO family. Fe(2+) serves as cofactor.

It is found in the cytoplasm. It carries out the reaction 3-hydroxyanthranilate + O2 = (2Z,4Z)-2-amino-3-carboxymuconate 6-semialdehyde. It functions in the pathway cofactor biosynthesis; NAD(+) biosynthesis; quinolinate from L-kynurenine: step 3/3. Its function is as follows. Catalyzes the oxidative ring opening of 3-hydroxyanthranilate to 2-amino-3-carboxymuconate semialdehyde, which spontaneously cyclizes to quinolinate. This Mycosarcoma maydis (Corn smut fungus) protein is 3-hydroxyanthranilate 3,4-dioxygenase.